Consider the following 126-residue polypeptide: Small ribosomal subunit protein uS12 (126 aa).

At Asp89 the chain carries 3-methylthioaspartic acid.

The protein belongs to the universal ribosomal protein uS12 family. As to quaternary structure, part of the 30S ribosomal subunit. Contacts proteins S8 and S17. May interact with IF1 in the 30S initiation complex.

Its function is as follows. With S4 and S5 plays an important role in translational accuracy. Interacts with and stabilizes bases of the 16S rRNA that are involved in tRNA selection in the A site and with the mRNA backbone. Located at the interface of the 30S and 50S subunits, it traverses the body of the 30S subunit contacting proteins on the other side and probably holding the rRNA structure together. The combined cluster of proteins S8, S12 and S17 appears to hold together the shoulder and platform of the 30S subunit. The polypeptide is Small ribosomal subunit protein uS12 (Carboxydothermus hydrogenoformans (strain ATCC BAA-161 / DSM 6008 / Z-2901)).